A 201-amino-acid chain; its full sequence is Large ribosomal subunit protein bL25 (201 aa).

The protein belongs to the bacterial ribosomal protein bL25 family. CTC subfamily. In terms of assembly, part of the 50S ribosomal subunit; part of the 5S rRNA/L5/L18/L25 subcomplex. Contacts the 5S rRNA. Binds to the 5S rRNA independently of L5 and L18.

Its function is as follows. This is one of the proteins that binds to the 5S RNA in the ribosome where it forms part of the central protuberance. The chain is Large ribosomal subunit protein bL25 from Chlorobaculum parvum (strain DSM 263 / NCIMB 8327) (Chlorobium vibrioforme subsp. thiosulfatophilum).